The primary structure comprises 519 residues: Acetylcholine receptor subunit beta-like 2 (519 aa).

The first 18 residues, 1–18 (MWHWSLLCVFLLVPLANS), serve as a signal peptide directing secretion. Topologically, residues 19 to 244 (TAPISFEANP…ITFKLTMRRK (226 aa)) are extracellular. Asparagine 50 carries an N-linked (GlcNAc...) asparagine glycan. Residues cysteine 154 and cysteine 168 are joined by a disulfide bond. 3 helical membrane passes run 245–269 (TLFYTVNLIVPCVALTFLTVLVFYL), 277–295 (VTLCISILVSLTVFFLLLA), and 311–332 (YLLFTMILVSLSVWTTVCVLNI). At 333–462 (HFRSPSTHNM…WKFVSMVLDR (130 aa)) the chain is on the cytoplasmic side. The chain crosses the membrane as a helical span at residues 463 to 481 (FFLWLFTLSCVFGTLAIIC).

This sequence belongs to the ligand-gated ion channel (TC 1.A.9) family. Acetylcholine receptor (TC 1.A.9.1) subfamily. As to expression, CNS in embryos.

It localises to the postsynaptic cell membrane. The protein resides in the cell membrane. In terms of biological role, after binding acetylcholine, the AChR responds by an extensive change in conformation that affects all subunits and leads to opening of an ion-conducting channel across the plasma membrane. This is Acetylcholine receptor subunit beta-like 2 (nAChRbeta2) from Drosophila melanogaster (Fruit fly).